A 155-amino-acid chain; its full sequence is Ribosomal RNA large subunit methyltransferase H (155 aa).

S-adenosyl-L-methionine is bound by residues leucine 72, glycine 103, and 122 to 127 (LSDLTL).

Belongs to the RNA methyltransferase RlmH family. As to quaternary structure, homodimer.

The protein resides in the cytoplasm. It carries out the reaction pseudouridine(1915) in 23S rRNA + S-adenosyl-L-methionine = N(3)-methylpseudouridine(1915) in 23S rRNA + S-adenosyl-L-homocysteine + H(+). Its function is as follows. Specifically methylates the pseudouridine at position 1915 (m3Psi1915) in 23S rRNA. This is Ribosomal RNA large subunit methyltransferase H from Acidovorax sp. (strain JS42).